A 468-amino-acid chain; its full sequence is ATP synthase subunit beta (468 aa).

ATP is bound at residue 155 to 162 (GGAGVGKT).

This sequence belongs to the ATPase alpha/beta chains family. In terms of assembly, F-type ATPases have 2 components, CF(1) - the catalytic core - and CF(0) - the membrane proton channel. CF(1) has five subunits: alpha(3), beta(3), gamma(1), delta(1), epsilon(1). CF(0) has three main subunits: a(1), b(2) and c(9-12). The alpha and beta chains form an alternating ring which encloses part of the gamma chain. CF(1) is attached to CF(0) by a central stalk formed by the gamma and epsilon chains, while a peripheral stalk is formed by the delta and b chains.

It is found in the cell membrane. The enzyme catalyses ATP + H2O + 4 H(+)(in) = ADP + phosphate + 5 H(+)(out). Its function is as follows. Produces ATP from ADP in the presence of a proton gradient across the membrane. The catalytic sites are hosted primarily by the beta subunits. This Streptococcus pyogenes serotype M1 protein is ATP synthase subunit beta.